Consider the following 661-residue polypeptide: Coagulation factor XIII B chain (661 aa).

The first 20 residues, 1-20 (MRLKNLTFIIILIISGELYA), serve as a signal peptide directing secretion. 10 Sushi domains span residues 24 to 88 (PCGF…PRCF), 89 to 148 (KKCT…TCRK), 151 to 210 (ETCL…KCTK), 211 to 269 (LKCS…VCEG), 272 to 329 (NRCP…KCIE), 334 to 391 (VACE…ECVE), 394 to 452 (ENCK…VCLE), 453 to 516 (PCTV…PLCT), 522 to 580 (GMCT…LCLE), and 581 to 647 (PCTL…PRCI). 20 cysteine pairs are disulfide-bonded: Cys25-Cys76, Cys59-Cys87, Cys91-Cys135, Cys118-Cys146, Cys153-Cys197, Cys180-Cys208, Cys213-Cys255, Cys241-Cys267, Cys274-Cys316, Cys302-Cys327, Cys336-Cys378, Cys364-Cys389, Cys396-Cys439, Cys425-Cys450, Cys454-Cys505, Cys486-Cys515, Cys524-Cys567, Cys553-Cys578, Cys582-Cys636, and Cys616-Cys646. An N-linked (GlcNAc...) asparagine glycan is attached at Asn162. Asn545 carries an N-linked (GlcNAc...) asparagine glycan. A Cell attachment site motif is present at residues 617-619 (RGD).

Tetramer of two A chains (F13A1) and two B (F13B) chains.

Its subcellular location is the secreted. Its function is as follows. The B chain of factor XIII is not catalytically active, but is thought to stabilize the A subunits and regulate the rate of transglutaminase formation by thrombin. The sequence is that of Coagulation factor XIII B chain (F13B) from Homo sapiens (Human).